Consider the following 400-residue polypeptide: Plasminogen activator inhibitor 1 (400 aa).

The signal sequence occupies residues 1–21 (MQMSTVCLALGLALVFGEASA). Residues Asn230, Asn286, and Asn350 are each glycosylated (N-linked (GlcNAc...) asparagine).

It belongs to the serpin family. As to quaternary structure, forms a heterodimer with TMPRSS7. Interacts with VTN. Binds LRP1B; binding is followed by internalization and degradation. Interacts with PPP1CB. In complex with PLAU/uPA, interacts with PLAUR/uPAR. Interacts with SORL1 and LRP1, either alone or in complex with PLAU; these interactions are abolished in the presence of LRPAP1/RAP. The ternary complex composed of PLAUR-PLAU-PAI1 also interacts with SORL1. Interacts with PLAT/tPA. Also interacts with SORL1, when complexed to PLAT/tPA.

The protein resides in the secreted. In terms of biological role, serine protease inhibitor. Inhibits TMPRSS7. Is a primary inhibitor of tissue-type plasminogen activator (PLAT) and urokinase-type plasminogen activator (PLAU). As PLAT inhibitor, it is required for fibrinolysis down-regulation and is responsible for the controlled degradation of blood clots. As PLAU inhibitor, it is involved in the regulation of cell adhesion and spreading. Acts as a regulator of cell migration, independently of its role as protease inhibitor. It is required for stimulation of keratinocyte migration during cutaneous injury repair. It is involved in cellular and replicative senescence. Plays a role in alveolar type 2 cells senescence in the lung. Is involved in the regulation of cementogenic differentiation of periodontal ligament stem cells, and regulates odontoblast differentiation and dentin formation during odontogenesis. The protein is Plasminogen activator inhibitor 1 (SERPINE1) of Neovison vison (American mink).